Reading from the N-terminus, the 184-residue chain is Ras protein let-60 (184 aa).

10-17 lines the GTP pocket; it reads GDGGVGKS. Residues 32 to 40 carry the Effector region motif; sequence YDPTIEDSY. GTP-binding positions include 57-61 and 116-119; these read DTAGQ and NKCD. A Cysteine methyl ester modification is found at Cys181. The S-farnesyl cysteine moiety is linked to residue Cys181. A propeptide spans 182–184 (removed in mature form); that stretch reads QIM.

It belongs to the small GTPase superfamily. Ras family. In terms of assembly, interacts with soc-2. Interacts (in GTP-bound form) with plc-1 (via Ras-associating domain 1). Expressed in body wall muscles and in the nervous system including ganglion, nerve ring dorsal and ventral nerve cords, motor neurons and sensory tail neurons.

It localises to the cell membrane. It catalyses the reaction GTP + H2O = GDP + phosphate + H(+). Functionally, GTP-binding protein with GTPase activity. The level of let-60 controls the switch between vulval and hypodermal cell fates during C.elegans vulval induction. May stimulate the guanine nucleotide exchange factor (GEF) activity of rap-1. May induce nuclear condensation. The chain is Ras protein let-60 from Caenorhabditis elegans.